The primary structure comprises 115 residues: uncharacterized protein (115 aa).

A signal peptide spans 1-26 (MNFKKTVVSALSISALALSVSGVASA). The region spanning 36-114 (VKNISISPTH…AVFGKVYVTV (79 aa)) is the BIG2 domain.

This is an uncharacterized protein from Bacillus subtilis (strain 168).